Here is an 810-residue protein sequence, read N- to C-terminus: Cation/H(+) antiporter 18 (810 aa).

12 consecutive transmembrane segments (helical) span residues 29-49 (FALP…RVLA), 59-76 (RVIA…SLLG), 91-111 (LTVL…LAGL), 126-146 (LGIA…SSFV), 157-177 (STAF…PVLA), 193-213 (LAMS…ALAI), 223-243 (LVSL…SFII), 277-297 (FITD…GVLI), 314-334 (LVSG…TNVA), 343-363 (GLLV…TLGV), 374-394 (AITL…VLNI), and 406-426 (FAIM…VVMA). Ser804 bears the Phosphoserine mark.

This sequence belongs to the monovalent cation:proton antiporter 2 (CPA2) transporter (TC 2.A.37) family. CHX (TC 2.A.37.4) subfamily. Expressed in roots.

The protein resides in the membrane. Its function is as follows. May operate as a cation/H(+) antiporter. This is Cation/H(+) antiporter 18 (CHX18) from Arabidopsis thaliana (Mouse-ear cress).